The chain runs to 205 residues: Ribosomal RNA large subunit methyltransferase E (205 aa).

S-adenosyl-L-methionine contacts are provided by Gly60, Trp62, Asp80, Asp96, and Asp121. Catalysis depends on Lys161, which acts as the Proton acceptor.

This sequence belongs to the class I-like SAM-binding methyltransferase superfamily. RNA methyltransferase RlmE family.

It localises to the cytoplasm. It catalyses the reaction uridine(2552) in 23S rRNA + S-adenosyl-L-methionine = 2'-O-methyluridine(2552) in 23S rRNA + S-adenosyl-L-homocysteine + H(+). Its function is as follows. Specifically methylates the uridine in position 2552 of 23S rRNA at the 2'-O position of the ribose in the fully assembled 50S ribosomal subunit. In Azoarcus sp. (strain BH72), this protein is Ribosomal RNA large subunit methyltransferase E.